Here is a 43-residue protein sequence, read N- to C-terminus: Protein PsbN (43 aa).

The helical transmembrane segment at 3 to 23 threads the bilayer; that stretch reads IATLVAIFISGLLVSFTGYAL.

It belongs to the PsbN family.

Its subcellular location is the plastid. The protein localises to the chloroplast thylakoid membrane. In terms of biological role, may play a role in photosystem I and II biogenesis. The chain is Protein PsbN from Euonymus alatus (Burning bush).